Reading from the N-terminus, the 835-residue chain is Leucine--tRNA ligase (835 aa).

Residues 41–52 (PYPSGQGLHVGH) carry the 'HIGH' region motif. The short motif at 611–615 (KMSKS) is the 'KMSKS' region element. K614 is an ATP binding site.

It belongs to the class-I aminoacyl-tRNA synthetase family.

It localises to the cytoplasm. It carries out the reaction tRNA(Leu) + L-leucine + ATP = L-leucyl-tRNA(Leu) + AMP + diphosphate. In Elusimicrobium minutum (strain Pei191), this protein is Leucine--tRNA ligase.